The following is a 515-amino-acid chain: N-acetylglucosamine-1-phosphodiester alpha-N-acetylglucosaminidase (515 aa).

The N-terminal stretch at 1–25 (MATSTGRWLLLRLALFGFLWEASGG) is a signal peptide. Positions 26–49 (LDSGASRDDDLLLPYPRARARLPR) are cleaved as a propeptide — removed in mature form. The Lumenal segment spans residues 50–448 (DCTRVRAGNR…AGELSFFTRT (399 aa)). Cystine bridges form between C115–C148, C132–C323, C307–C314, C362–C373, and C380–C389. 3 N-linked (GlcNAc...) asparagine glycosylation sites follow: N208, N214, and N296. The EGF-like domain occupies 358-390 (DELDCGPSNCSQHGLCTETGCRCDAGWTGSNCS). N-linked (GlcNAc...) asparagine glycans are attached at residues N366, N388, and N420. Residues 449-469 (AWLALTLALAFLLLISTAANL) traverse the membrane as a helical segment. The Cytoplasmic portion of the chain corresponds to 470–515 (SLLLSRAERNRRLHGDYAYHPLQEMNGEPLAAEKEQPGGAHNPFKD). Residues 486-493 (YAYHPLQE) are mediates the interaction with AP4M1. The Tyrosine-based internalization motif signature appears at 488-491 (YHPL). The NPF internalization motif motif lies at 511 to 515 (NPFKD).

In terms of assembly, homotetramer arranged as two disulfide-linked homodimers. Interacts with AP4M1. Post-translationally, the precursor is cleaved and activated in the trans-Golgi network by a furin endopeptidase. In terms of tissue distribution, isoform 2 may be brain-specific.

It is found in the golgi apparatus. The protein resides in the golgi stack membrane. The protein localises to the trans-Golgi network. The catalysed reaction is N(4)-[6-(N-acetyl-alpha-D-glucosaminyl-1-phospho)-alpha-D-mannosyl-(1-&gt;2)-alpha-D-mannosyl-(glycan)]-L-asparaginyl-[protein] + H2O = N(4)-[6-phospho-alpha-D-mannosyl-(1-&gt;2)-alpha-D-mannosyl-(glycan)]-L-asparaginyl-[protein] + N-acetyl-D-glucosamine + H(+). It functions in the pathway protein modification; protein glycosylation. In terms of biological role, catalyzes the second step in the formation of the mannose 6-phosphate targeting signal on lysosomal enzyme oligosaccharides by removing GlcNAc residues from GlcNAc-alpha-P-mannose moieties, which are formed in the first step. Also hydrolyzes UDP-GlcNAc, a sugar donor for Golgi N-acetylglucosaminyltransferases. In Homo sapiens (Human), this protein is N-acetylglucosamine-1-phosphodiester alpha-N-acetylglucosaminidase (NAGPA).